A 90-amino-acid chain; its full sequence is MALDMAKKKEIIAKFARDSKDTGSSEVQIALLSQRIADLTEHLKANPKDHSSRLGLLKLVGQRKSLLSYLKKTQYNRYAKLIGELKLKDR.

It belongs to the universal ribosomal protein uS15 family. As to quaternary structure, part of the 30S ribosomal subunit. Forms a bridge to the 50S subunit in the 70S ribosome, contacting the 23S rRNA.

One of the primary rRNA binding proteins, it binds directly to 16S rRNA where it helps nucleate assembly of the platform of the 30S subunit by binding and bridging several RNA helices of the 16S rRNA. Functionally, forms an intersubunit bridge (bridge B4) with the 23S rRNA of the 50S subunit in the ribosome. This Helicobacter hepaticus (strain ATCC 51449 / 3B1) protein is Small ribosomal subunit protein uS15.